We begin with the raw amino-acid sequence, 231 residues long: DNA damage response protein C (231 aa).

In terms of assembly, homodimer.

It is found in the cytoplasm. The protein resides in the nucleoid. In terms of biological role, appears to contribute to D.radiodurans capacity to survive exposure to ionizing radiation. Likely functions as a DNA damage-induced nucleoid-associated protein (NAP) that contributes to the enhanced level of nucleoid compaction after irradiation by bridging DNA duplexes, thereby limiting the dispersion of the fragmented genome immediately after irradiation to facilitate subsequent DNA repair. In vitro, binds both ssDNA and dsDNA, and is able to compact circular DNA, circularize linear DNA, anneal complementary DNA strands and protect DNA from nucleases. This chain is DNA damage response protein C, found in Deinococcus radiodurans (strain ATCC 13939 / DSM 20539 / JCM 16871 / CCUG 27074 / LMG 4051 / NBRC 15346 / NCIMB 9279 / VKM B-1422 / R1).